The sequence spans 489 residues: UDP-N-acetylmuramoyl-L-alanyl-D-glutamate--2,6-diaminopimelate ligase (489 aa).

Position 30 (Ser-30) interacts with UDP-N-acetyl-alpha-D-muramoyl-L-alanyl-D-glutamate. 108–114 (GTNGKTT) is a binding site for ATP. UDP-N-acetyl-alpha-D-muramoyl-L-alanyl-D-glutamate is bound by residues Asn-149, 150–151 (TT), Ser-177, Gln-183, and Arg-185. An N6-carboxylysine modification is found at Lys-217. Residues Arg-383, 407-410 (DNPR), Gly-459, and Glu-463 each bind meso-2,6-diaminopimelate. The short motif at 407 to 410 (DNPR) is the Meso-diaminopimelate recognition motif element.

This sequence belongs to the MurCDEF family. MurE subfamily. The cofactor is Mg(2+). Carboxylation is probably crucial for Mg(2+) binding and, consequently, for the gamma-phosphate positioning of ATP.

The protein localises to the cytoplasm. The catalysed reaction is UDP-N-acetyl-alpha-D-muramoyl-L-alanyl-D-glutamate + meso-2,6-diaminopimelate + ATP = UDP-N-acetyl-alpha-D-muramoyl-L-alanyl-gamma-D-glutamyl-meso-2,6-diaminopimelate + ADP + phosphate + H(+). It functions in the pathway cell wall biogenesis; peptidoglycan biosynthesis. Its function is as follows. Catalyzes the addition of meso-diaminopimelic acid to the nucleotide precursor UDP-N-acetylmuramoyl-L-alanyl-D-glutamate (UMAG) in the biosynthesis of bacterial cell-wall peptidoglycan. This chain is UDP-N-acetylmuramoyl-L-alanyl-D-glutamate--2,6-diaminopimelate ligase, found in Geobacillus kaustophilus (strain HTA426).